The chain runs to 422 residues: MFLKVQKSDISGSISIPGSKSHTIRSLFLAGLAKGTSVIRNPLLSTDAVSGVNVCRAFGSTYDLNNESYVVNGMGACPQVPENVIDVGNSGTSLRLGLMTAALVDGYTVFTGDYQIRKRQIGPLVEAINNLGGKAFTTRGNESAPVVIKGRATGGYTKLDCVTSQYLSSILLNTPLLEKDTHVEITRLNEIPYVEITLWWLDKLGIKYSHNSMKEFFIPGGQQYRPFECTIPGDFSSATFFMVQAAISERELVLTNLDMSDPQGDKAVLDILADMGAEIKYDHNNIKIKGKSLKGREIDMNSIPDALPAMAVAACFAKGETRLVNVPQARLKETDRISVMCSELTKMGADISELPDGLVIRESKLHGAAVKGYDDHRIVMSLAIAGLNCSGETVIDTAEAMNVTYPGFVESVKSCGGKIELI.

Residues lysine 20, serine 21, and arginine 25 each contribute to the 3-phosphoshikimate site. Phosphoenolpyruvate is bound at residue lysine 20. Positions 91 and 119 each coordinate phosphoenolpyruvate. 6 residues coordinate 3-phosphoshikimate: threonine 163, serine 164, glutamine 165, aspartate 305, glutamine 328, and lysine 332. Glutamine 165 contributes to the phosphoenolpyruvate binding site. Aspartate 305 (proton acceptor) is an active-site residue. Residues arginine 336 and arginine 377 each coordinate phosphoenolpyruvate.

This sequence belongs to the EPSP synthase family. As to quaternary structure, monomer.

It is found in the cytoplasm. It catalyses the reaction 3-phosphoshikimate + phosphoenolpyruvate = 5-O-(1-carboxyvinyl)-3-phosphoshikimate + phosphate. The protein operates within metabolic intermediate biosynthesis; chorismate biosynthesis; chorismate from D-erythrose 4-phosphate and phosphoenolpyruvate: step 6/7. Functionally, catalyzes the transfer of the enolpyruvyl moiety of phosphoenolpyruvate (PEP) to the 5-hydroxyl of shikimate-3-phosphate (S3P) to produce enolpyruvyl shikimate-3-phosphate and inorganic phosphate. The polypeptide is 3-phosphoshikimate 1-carboxyvinyltransferase (Ruminiclostridium cellulolyticum (strain ATCC 35319 / DSM 5812 / JCM 6584 / H10) (Clostridium cellulolyticum)).